Here is a 151-residue protein sequence, read N- to C-terminus: Small ribosomal subunit protein bS6 (151 aa).

Residues 97 to 151 (EAEPSAMMQKRDRDDRKDRDRGDRPRRRDDDFGGGDRGDRGDRGDRPERNFGGEN) are disordered. The span at 105–151 (QKRDRDDRKDRDRGDRPRRRDDDFGGGDRGDRGDRGDRPERNFGGEN) shows a compositional bias: basic and acidic residues.

It belongs to the bacterial ribosomal protein bS6 family.

Functionally, binds together with bS18 to 16S ribosomal RNA. This chain is Small ribosomal subunit protein bS6, found in Methylorubrum extorquens (strain CM4 / NCIMB 13688) (Methylobacterium extorquens).